We begin with the raw amino-acid sequence, 393 residues long: 8-amino-7-oxononanoate synthase (393 aa).

107-108 (GF) is a binding site for pyridoxal 5'-phosphate. Substrate is bound at residue H132. Residues S180, 205–208 (DDAH), and 236–239 (TLSK) each bind pyridoxal 5'-phosphate. K239 is subject to N6-(pyridoxal phosphate)lysine. Position 353 (T353) interacts with substrate.

It belongs to the class-II pyridoxal-phosphate-dependent aminotransferase family. BioF subfamily. As to quaternary structure, homodimer. Pyridoxal 5'-phosphate serves as cofactor.

The enzyme catalyses 6-carboxyhexanoyl-[ACP] + L-alanine + H(+) = (8S)-8-amino-7-oxononanoate + holo-[ACP] + CO2. The protein operates within cofactor biosynthesis; biotin biosynthesis. Functionally, catalyzes the decarboxylative condensation of pimeloyl-[acyl-carrier protein] and L-alanine to produce 8-amino-7-oxononanoate (AON), [acyl-carrier protein], and carbon dioxide. This chain is 8-amino-7-oxononanoate synthase, found in Coprothermobacter proteolyticus (strain ATCC 35245 / DSM 5265 / OCM 4 / BT).